The following is a 493-amino-acid chain: MFS-type transporter efuF (493 aa).

A run of 11 helical transmembrane segments spans residues 90–110 (ITLV…NMLL), 117–137 (IMLP…CAVH), 147–167 (LLMG…LTTF), 179–199 (IFYG…YGVF), 211–231 (FLMI…YWHL), 279–299 (IALY…VGNF), 316–336 (LYTV…CTSS), 343–363 (STHL…LITL), 370–390 (GPTY…SCIF), 406–426 (AVTG…SLAF), and 435–455 (IPAL…VLGF).

The protein belongs to the major facilitator superfamily.

The protein resides in the membrane. In terms of biological role, MFS-type transporter; part of the gene cluster that mediates the biosynthesis of enfumafungin, a glycosylated fernene-type triterpenoid with potent antifungal activity, mediated by its interaction with beta-1,3-glucan synthase and the fungal cell wall. Might facilitate the transport of glucose units to the subcellular site of enfumafungin biosynthesis. In Hormonema carpetanum, this protein is MFS-type transporter efuF.